A 296-amino-acid chain; its full sequence is Glycine--tRNA ligase alpha subunit (296 aa).

The protein belongs to the class-II aminoacyl-tRNA synthetase family. In terms of assembly, tetramer of two alpha and two beta subunits.

The protein localises to the cytoplasm. It carries out the reaction tRNA(Gly) + glycine + ATP = glycyl-tRNA(Gly) + AMP + diphosphate. The chain is Glycine--tRNA ligase alpha subunit from Synechococcus sp. (strain CC9605).